The chain runs to 358 residues: MAEFIRAQIFGTTFEITSRYSDLQPVGMGAFGLVCSAKDQLTNQNVAIKKIMKPFSTPVLAKRTYRELKLLKHLRHENVISLSDIFISPLEDIYFVTELLGTDLHRLLTSRPLEKQFIQYFLYQIMRGLKYVHSAGVVHRDLKPSNILVNENCDLKICDFGLARIQDPQMTGYVSTRYYRAPEIMLTWQKYDVEVDIWSAGCIFAEMLEGKPLFPGKDHVNQFSIITELLGTPPDDVINTIASENTLRFVKSLPKRERQPLKNKFKNADSSAVDLLERMLVFDPKKRITATEALSHEYLAPYHDPTDEPVAEEKFDWSFNDADLPVDTWKIMMYSEILDYHNVEASGQMMFQEDVPPQ.

The Protein kinase domain maps to Tyr20–Leu299. Residues Val26–Val34 and Lys49 each bind ATP. The Proton acceptor role is filled by Asp141. Thr171 carries the phosphothreonine modification. A TXY motif is present at residues Thr171–Tyr173. Tyr173 is subject to Phosphotyrosine.

It belongs to the protein kinase superfamily. Ser/Thr protein kinase family. MAP kinase subfamily. HOG1 sub-subfamily. Mg(2+) serves as cofactor. Post-translationally, dually phosphorylated on Thr-171 and Tyr-173, which activates the enzyme. Phosphorylation is induced by fungicides and osmotic stress.

Its subcellular location is the cytoplasm. The protein localises to the nucleus. It carries out the reaction L-seryl-[protein] + ATP = O-phospho-L-seryl-[protein] + ADP + H(+). The enzyme catalyses L-threonyl-[protein] + ATP = O-phospho-L-threonyl-[protein] + ADP + H(+). With respect to regulation, activated by tyrosine and threonine phosphorylation. Its function is as follows. Proline-directed serine/threonine-protein kinase involved in a signal transduction pathway that is activated by changes in the osmolarity of the extracellular environment. Controls osmotic regulation of transcription of target genes. Involved in ion flux-mediated turgor regulation. In Neurospora crassa (strain ATCC 24698 / 74-OR23-1A / CBS 708.71 / DSM 1257 / FGSC 987), this protein is Mitogen-activated protein kinase hog-1 (hog-1).